The following is a 239-amino-acid chain: Pyridoxine 5'-phosphate synthase (239 aa).

Residue N7 participates in 3-amino-2-oxopropyl phosphate binding. 9 to 10 provides a ligand contact to 1-deoxy-D-xylulose 5-phosphate; the sequence is DH. Residue R18 participates in 3-amino-2-oxopropyl phosphate binding. Residue H43 is the Proton acceptor of the active site. Positions 45 and 50 each coordinate 1-deoxy-D-xylulose 5-phosphate. The active-site Proton acceptor is E70. Position 100 (T100) interacts with 1-deoxy-D-xylulose 5-phosphate. The active-site Proton donor is H191. 3-amino-2-oxopropyl phosphate-binding positions include G192 and 213–214; that span reads GH.

It belongs to the PNP synthase family. Homooctamer; tetramer of dimers.

It is found in the cytoplasm. It carries out the reaction 3-amino-2-oxopropyl phosphate + 1-deoxy-D-xylulose 5-phosphate = pyridoxine 5'-phosphate + phosphate + 2 H2O + H(+). It participates in cofactor biosynthesis; pyridoxine 5'-phosphate biosynthesis; pyridoxine 5'-phosphate from D-erythrose 4-phosphate: step 5/5. Its function is as follows. Catalyzes the complicated ring closure reaction between the two acyclic compounds 1-deoxy-D-xylulose-5-phosphate (DXP) and 3-amino-2-oxopropyl phosphate (1-amino-acetone-3-phosphate or AAP) to form pyridoxine 5'-phosphate (PNP) and inorganic phosphate. This chain is Pyridoxine 5'-phosphate synthase, found in Desulforapulum autotrophicum (strain ATCC 43914 / DSM 3382 / VKM B-1955 / HRM2) (Desulfobacterium autotrophicum).